Here is a 326-residue protein sequence, read N- to C-terminus: 5-dehydro-2-deoxygluconokinase (326 aa).

This sequence belongs to the carbohydrate kinase PfkB family.

It carries out the reaction 5-dehydro-2-deoxy-D-gluconate + ATP = 6-phospho-5-dehydro-2-deoxy-D-gluconate + ADP + H(+). The protein operates within polyol metabolism; myo-inositol degradation into acetyl-CoA; acetyl-CoA from myo-inositol: step 5/7. Its function is as follows. Catalyzes the phosphorylation of 5-dehydro-2-deoxy-D-gluconate (2-deoxy-5-keto-D-gluconate or DKG) to 6-phospho-5-dehydro-2-deoxy-D-gluconate (DKGP). The chain is 5-dehydro-2-deoxygluconokinase from Lacticaseibacillus casei (Lactobacillus casei).